The sequence spans 370 residues: NAD-dependent histone deacetylase HST4 (370 aa).

Residues 1-27 (MKQKFVLPITPPSTAEKKPQTENRCNE) form a disordered region. Basic and acidic residues predominate over residues 15-27 (AEKKPQTENRCNE). A Deacetylase sirtuin-type domain is found at 75-370 (RHHMDRDAGF…GDCQHVTSLL (296 aa)). NAD(+)-binding positions include 100–119 (GAGISVAAGIPDFRSSEGIF) and 184–187 (QNID). His-213 functions as the Proton acceptor in the catalytic mechanism. 4 residues coordinate Zn(2+): Cys-221, Cys-224, Cys-251, and Cys-254. NAD(+)-binding positions include 310–312 (GTS), 340–342 (NTS), and Cys-363.

The protein belongs to the sirtuin family. Class I subfamily. It depends on Zn(2+) as a cofactor.

Its subcellular location is the nucleus. It carries out the reaction N(6)-acetyl-L-lysyl-[protein] + NAD(+) + H2O = 2''-O-acetyl-ADP-D-ribose + nicotinamide + L-lysyl-[protein]. NAD-dependent histone deacetylase, which contributes together with HST3 to histone H3 'Lys-56' deacetylation, regulation of telomeric silencing, proper cell cycle progression, DNA damage control, DNA recombination, and genomic maintenance. In Saccharomyces cerevisiae (strain ATCC 204508 / S288c) (Baker's yeast), this protein is NAD-dependent histone deacetylase HST4 (HST4).